The sequence spans 1077 residues: Adenylate cyclase type 4 (1077 aa).

Over 1-28 (MARLFSPRPPPSEDLFYETYYSLSQQYP) the chain is Cytoplasmic. The next 6 helical transmembrane spans lie at 29–50 (LLIL…VAWA), 61–80 (FLTT…GLAS), 94–117 (GLIW…VSAW), 120–138 (VSFF…PLGM), 141–162 (AAAA…YLGW), and 170–190 (LLPQ…VGAY). The Cytoplasmic portion of the chain corresponds to 191-582 (HKALMERALR…YRLSALPAFK (392 aa)). Mg(2+)-binding residues include Asp278, Ile279, and Asp322. ATP-binding positions include 278-283 (DIVGFT), 320-322 (LGD), and Arg366. The disordered stretch occupies residues 503-524 (TSTPLPEKAFSPQWSLDRSRTP). Ser517 is subject to Phosphoserine. A Phosphothreonine modification is found at Thr533. A run of 3 helical transmembrane segments spans residues 583 to 604 (YYAA…LVTT), 608 to 630 (ALII…CFSE), and 661 to 684 (VALG…FLPV). Residues 685–717 (SSDCLFLASNVSSVTFNASWEMPGSLPLISIPL) lie on the Extracellular side of the membrane. N-linked (GlcNAc...) asparagine glycosylation is found at Asn694 and Asn701. Transmembrane regions (helical) follow at residues 718–738 (ISIP…SLFL), 746–766 (LLLL…SHAW), and 793–809 (MGAI…LVLA). Residues 810-1077 (RQNEYYCRLD…LTRTGSPSAS (268 aa)) lie on the Cytoplasmic side of the membrane. ATP is bound by residues Lys927, 1007-1009 (DIW), 1014-1018 (NVASR), and Lys1054.

The protein belongs to the adenylyl cyclase class-4/guanylyl cyclase family. Mg(2+) is required as a cofactor. Mn(2+) serves as cofactor.

The protein localises to the cell membrane. The protein resides in the cytoplasm. It catalyses the reaction ATP = 3',5'-cyclic AMP + diphosphate. Activated by forskolin. Insensitive to calcium/calmodulin. Stimulated by GNAS and by the G-protein beta and gamma subunit complex. Catalyzes the formation of the signaling molecule cAMP in response to G-protein signaling. The chain is Adenylate cyclase type 4 (Adcy4) from Mus musculus (Mouse).